Here is a 64-residue protein sequence, read N- to C-terminus: Bacteriocin glycocin F (64 aa).

An N-terminal signal peptide occupies residues 1–21 (MSKLVKTLTISEISKAQNNGG). 2 disulfides stabilise this stretch: Cys26-Cys49 and Cys33-Cys42. A glycan (O-linked (GlcNAc) serine) is linked at Ser39. A glycan (S-linked (GlcNAc) cysteine) is linked at Cys64.

Its subcellular location is the secreted. In terms of biological role, has antibacterial activity against L.plantarum ATCC 8014. In purified form, the activity is bacteriostatic (IC(50)=2 nM) rather than bactericidal. The polypeptide is Bacteriocin glycocin F (Lactiplantibacillus plantarum (Lactobacillus plantarum)).